The following is a 62-amino-acid chain: MIIAFQFALFALVAISFILVVGVPVILASPEGWSNTKNAVFSGASLWIFLVFVVGILNSFIA.

The next 2 membrane-spanning stretches (helical) occupy residues 8 to 28 and 41 to 61; these read ALFALVAISFILVVGVPVILA and FSGASLWIFLVFVVGILNSFI.

The protein belongs to the PsbZ family. In terms of assembly, PSII is composed of 1 copy each of membrane proteins PsbA, PsbB, PsbC, PsbD, PsbE, PsbF, PsbH, PsbI, PsbJ, PsbK, PsbL, PsbM, PsbT, PsbY, PsbZ, Psb30/Ycf12, at least 3 peripheral proteins of the oxygen-evolving complex and a large number of cofactors. It forms dimeric complexes.

The protein resides in the plastid. It localises to the chloroplast thylakoid membrane. In terms of biological role, may control the interaction of photosystem II (PSII) cores with the light-harvesting antenna, regulates electron flow through the 2 photosystem reaction centers. PSII is a light-driven water plastoquinone oxidoreductase, using light energy to abstract electrons from H(2)O, generating a proton gradient subsequently used for ATP formation. In Chara vulgaris (Common stonewort), this protein is Photosystem II reaction center protein Z.